A 309-amino-acid chain; its full sequence is Calponin-2 (309 aa).

The residue at position 2 (Ser2) is an N-acetylserine. N6-acetyllysine occurs at positions 8 and 25. The 105-residue stretch at 28–132 (PQKEAELRSW…SLLALAGKAK (105 aa)) folds into the Calponin-homology (CH) domain. Ser138 carries the post-translational modification Phosphoserine. Calponin-like repeat units follow at residues 166 to 191 (IGLQ…RHLY), 206 to 231 (ISLQ…RHIY), and 245 to 269 (MSLQ…RQIY). The interval 273–309 (YCPQGPAADGAPAAAGDGPGPGEPSECPPYYQEEAGY) is disordered. Over residues 277 to 288 (GPAADGAPAAAG) the composition is skewed to low complexity.

This sequence belongs to the calponin family.

Its function is as follows. Thin filament-associated protein that is implicated in the regulation and modulation of smooth muscle contraction. It is capable of binding to actin, calmodulin and tropomyosin. The interaction of calponin with actin inhibits the actomyosin Mg-ATPase activity. The chain is Calponin-2 (CNN2) from Bos taurus (Bovine).